Here is a 706-residue protein sequence, read N- to C-terminus: Cyclic nucleotide-gated channel alpha-3 (706 aa).

Residues 1 to 189 (MAKISTQYSH…MDPSSNMYYH (189 aa)) are Cytoplasmic-facing. Positions 113-177 (RESHVQFNVG…PKKEEKKKDS (65 aa)) are disordered. The span at 147–177 (SEKDDKAKKEEKEKKEEKKENPKKEEKKKDS) shows a compositional bias: basic and acidic residues. A helical transmembrane segment spans residues 190–211 (WLTVIAVPVFYNWCLLVCRACF). Over 212–217 (DELQSE) the chain is Extracellular. The helical transmembrane segment at 218–238 (HLMLWLVLDYSADILYGMDML) threads the bilayer. Residues 239 to 265 (VRARTGFLEQGLMVMDASRLWKHYTQT) are Cytoplasmic-facing. The helical transmembrane segment at 266 to 285 (LHFKLDVLSLVPTDLAYFKL) threads the bilayer. The Extracellular portion of the chain corresponds to 286 to 289 (GMNY). A helical membrane pass occupies residues 290 to 307 (PELRFNRLLKLARLFEFF). The Cytoplasmic portion of the chain corresponds to 308 to 317 (DRTETRTNYP). The tract at residues 317 to 425 (PNMFRIGNLV…GNVGSMISNM (109 aa)) is ion conduction pathway. A helical transmembrane segment spans residues 318-340 (NMFRIGNLVLYILIIIHWNACIY). Topologically, residues 341-366 (FAISKFIGFGTDSWVYPNVSNPEYGR) are extracellular. A glycan (N-linked (GalNAc...) asparagine) is linked at asparagine 358. The next 2 membrane-spanning stretches (helical) occupy residues 367 to 397 (LSRK…DEEY) and 398 to 422 (LFVV…GSMI). The interval 384–387 (TIGE) is selectivity filter. The Cytoplasmic portion of the chain corresponds to 423-706 (SNMNASRAEF…DAPQTEASQP (284 aa)). The interval 427–504 (ASRAEFQAKI…TLRKVRIFQD (78 aa)) is C-linker. The segment at 507-627 (AGLLVELVLK…EEKGRQILMK (121 aa)) is cyclic nucleotide-binding domain. Residues glycine 567, glutamate 568, serine 570, arginine 583, threonine 584, and aspartate 628 each coordinate 3',5'-cyclic GMP. Positions 645–688 (IEEKVEHLETSLDSLQTRFARLLAEYNATQMKVKQRLSQLESQV) form a coiled coil. The segment at 685–706 (ESQVKMGLPPDGDAPQTEASQP) is disordered.

This sequence belongs to the cyclic nucleotide-gated cation channel (TC 1.A.1.5) family. CNGA3 subfamily. Forms heterotetrameric channels composed of CNGA3 and CNGB3 subunits with 3:1 stoichiometry. As to expression, testis, kidney, retinal cone (at protein level) and heart.

It is found in the cell membrane. It catalyses the reaction Ca(2+)(in) = Ca(2+)(out). It carries out the reaction Na(+)(in) = Na(+)(out). The enzyme catalyses K(+)(in) = K(+)(out). The catalysed reaction is NH4(+)(in) = NH4(+)(out). It catalyses the reaction Rb(+)(in) = Rb(+)(out). It carries out the reaction Li(+)(in) = Li(+)(out). The enzyme catalyses Cs(+)(in) = Cs(+)(out). Its activity is regulated as follows. Ca(2+) influx is inhibited by extracellular Mg(2+) ions. Pore-forming subunit of the cone cyclic nucleotide-gated channel. Mediates cone photoresponses at bright light converting transient changes in intracellular cGMP levels into electrical signals. In the dark, cGMP levels are high and keep the channel open enabling a steady inward current carried by Na(+) and Ca(2+) ions that leads to membrane depolarization and neurotransmitter release from synaptic terminals. Upon photon absorption cGMP levels decline leading to channel closure and membrane hyperpolarization that ultimately slows neurotransmitter release and signals the presence of light, the end point of the phototransduction cascade. Pore-forming subunit of the gustatory cyclic nucleotide-gated channel. In the taste buds, may sense oral extracellular pH and conduct ion currents that modulate the excitability of taste cells. Conducts cGMP- and cAMP-gated ion currents, with permeability for monovalent and divalent cations. This is Cyclic nucleotide-gated channel alpha-3 from Bos taurus (Bovine).